A 318-amino-acid chain; its full sequence is Dihydroorotate dehydrogenase B (NAD(+)), catalytic subunit (318 aa).

Residues S19 and 43–44 (KT) contribute to the FMN site. Substrate is bound by residues K43, 69 to 73 (NAMGL), and N125. N125 provides a ligand contact to FMN. Catalysis depends on C128, which acts as the Nucleophile. Residues K164 and V192 each contribute to the FMN site. Position 193-194 (193-194 (NT)) interacts with substrate. Residues G219, 247-248 (GG), and 269-270 (AT) each bind FMN.

Belongs to the dihydroorotate dehydrogenase family. Type 1 subfamily. Heterotetramer of 2 PyrK and 2 PyrD type B subunits. FMN serves as cofactor.

It localises to the cytoplasm. It catalyses the reaction (S)-dihydroorotate + NAD(+) = orotate + NADH + H(+). It functions in the pathway pyrimidine metabolism; UMP biosynthesis via de novo pathway; orotate from (S)-dihydroorotate (NAD(+) route): step 1/1. Catalyzes the conversion of dihydroorotate to orotate with NAD(+) as electron acceptor. The sequence is that of Dihydroorotate dehydrogenase B (NAD(+)), catalytic subunit (pyrD) from Methanopyrus kandleri (strain AV19 / DSM 6324 / JCM 9639 / NBRC 100938).